The sequence spans 246 residues: UDP-N-acetyl-D-mannosaminuronic acid transferase (246 aa).

It belongs to the glycosyltransferase 26 family.

It carries out the reaction UDP-N-acetyl-alpha-D-mannosaminouronate + N-acetyl-alpha-D-glucosaminyl-di-trans,octa-cis-undecaprenyl diphosphate = beta-D-ManNAcA-(1-&gt;4)-alpha-D-GlcNAc-di-trans,octa-cis-undecaprenyl diphosphate + UDP + H(+). The protein operates within bacterial outer membrane biogenesis; enterobacterial common antigen biosynthesis. Catalyzes the synthesis of Und-PP-GlcNAc-ManNAcA (Lipid II), the second lipid-linked intermediate involved in enterobacterial common antigen (ECA) synthesis. This chain is UDP-N-acetyl-D-mannosaminuronic acid transferase, found in Serratia proteamaculans (strain 568).